The following is a 737-amino-acid chain: Ribosome-releasing factor 2, mitochondrial (737 aa).

The transit peptide at 1–29 (MLKYALHSGGMPRNRLLRQLSAYIFRRSY) directs the protein to the mitochondrion. In terms of domain architecture, tr-type G spans 31-310 (SNIRNIGILA…AVNTYLPAPE (280 aa)). GTP-binding positions include 40-47 (AHIDAGKT), 104-108 (DTPGH), and 158-161 (NKMD).

Belongs to the TRAFAC class translation factor GTPase superfamily. Classic translation factor GTPase family. EF-G/EF-2 subfamily.

The protein resides in the mitochondrion. Mitochondrial GTPase that mediates the disassembly of ribosomes from messenger RNA at the termination of mitochondrial protein biosynthesis. Not involved in the GTP-dependent ribosomal translocation step during translation elongation. This chain is Ribosome-releasing factor 2, mitochondrial, found in Drosophila persimilis (Fruit fly).